A 102-amino-acid chain; its full sequence is ATP-dependent Clp protease adapter protein ClpS (102 aa).

Belongs to the ClpS family. As to quaternary structure, binds to the N-terminal domain of the chaperone ClpA.

Its function is as follows. Involved in the modulation of the specificity of the ClpAP-mediated ATP-dependent protein degradation. In Shewanella amazonensis (strain ATCC BAA-1098 / SB2B), this protein is ATP-dependent Clp protease adapter protein ClpS.